We begin with the raw amino-acid sequence, 198 residues long: Nucleoid occlusion factor SlmA (198 aa).

Residues 9 to 70 form the HTH tetR-type domain; the sequence is RNRREEILQA…SLIEFIEDSL (62 aa). Residues 33-52 constitute a DNA-binding region (H-T-H motif); that stretch reads TTAKLAANVGVSEAALYRHF. A coiled-coil region spans residues 119 to 144; the sequence is DRLQGRINQLFERIEMQLRQVLREKK.

This sequence belongs to the nucleoid occlusion factor SlmA family. As to quaternary structure, homodimer. Interacts with FtsZ.

The protein localises to the cytoplasm. It is found in the nucleoid. Its function is as follows. Required for nucleoid occlusion (NO) phenomenon, which prevents Z-ring formation and cell division over the nucleoid. Acts as a DNA-associated cell division inhibitor that binds simultaneously chromosomal DNA and FtsZ, and disrupts the assembly of FtsZ polymers. SlmA-DNA-binding sequences (SBS) are dispersed on non-Ter regions of the chromosome, preventing FtsZ polymerization at these regions. The protein is Nucleoid occlusion factor SlmA of Yersinia pseudotuberculosis serotype I (strain IP32953).